The primary structure comprises 310 residues: uncharacterized protein (310 aa).

An HTH lysR-type domain is found at 5–62 (FTEENLLAFTTAARFGSFSKAAEELGLTTSAISYTIKRMETGLDVVLFTRSTRSIELT). Residues 22–42 (FSKAAEELGLTTSAISYTIKR) constitute a DNA-binding region (H-T-H motif).

The protein belongs to the LysR transcriptional regulatory family.

This is an uncharacterized protein from Escherichia coli (strain K12).